Consider the following 124-residue polypeptide: UPF0231 protein Sbal223_3655 (124 aa).

This sequence belongs to the UPF0231 family.

The sequence is that of UPF0231 protein Sbal223_3655 from Shewanella baltica (strain OS223).